We begin with the raw amino-acid sequence, 265 residues long: S-acyl fatty acid synthase thioesterase, medium chain (265 aa).

Position 1 is an N-acetylmethionine (Met-1). Catalysis depends on residues Ser-101 and His-237.

The protein belongs to the thioesterase family. As to quaternary structure, interacts (via C-terminus) with FASN. In terms of tissue distribution, detected both in lactating and non-lactating breast epithelium (at protein level). Isoform 2 is up-regulated in bone marrow-derived mononuclear cells of rheumatoid arthritis patients.

It localises to the cytoplasm. The protein localises to the cytosol. The enzyme catalyses (9Z)-octadecenoyl-[ACP] + H2O = (9Z)-octadecenoate + holo-[ACP] + H(+). It carries out the reaction decanoyl-CoA + H2O = decanoate + CoA + H(+). The catalysed reaction is dodecanoyl-CoA + H2O = dodecanoate + CoA + H(+). It catalyses the reaction tetradecanoyl-CoA + H2O = tetradecanoate + CoA + H(+). The enzyme catalyses hexadecanoyl-CoA + H2O = hexadecanoate + CoA + H(+). Contributes to the release of free fatty acids from fatty acid synthase (FASN). Has broad substrate specificity, giving rise to a range of free fatty acids with chain lengths between 10 and 16 carbon atoms (C10 - C16). The polypeptide is S-acyl fatty acid synthase thioesterase, medium chain (Homo sapiens (Human)).